The sequence spans 199 residues: uncharacterized protein (199 aa).

The next 7 helical transmembrane spans lie at 10 to 32 (LTSQ…FIGY), 37 to 59 (VYSA…INYY), 63 to 80 (LIVI…FALI), 83 to 100 (LGLI…GVYL), 104 to 121 (YQVY…INLF), 126 to 148 (LTVL…MGIT), and 163 to 185 (FDAI…TGII).

It localises to the cell membrane. This is an uncharacterized protein from Archaeoglobus fulgidus (strain ATCC 49558 / DSM 4304 / JCM 9628 / NBRC 100126 / VC-16).